Here is a 183-residue protein sequence, read N- to C-terminus: Outer membrane protein H.8 (183 aa).

The N-terminal stretch at 1 to 17 is a signal peptide; the sequence is MKAYLALISAAVIGLAA. A lipid anchor (N-palmitoyl cysteine) is attached at cysteine 18. Residue cysteine 18 is the site of S-diacylglycerol cysteine attachment. Residues 27-51 are disordered; the sequence is AEATPAGEAPASEAPAAEAAPADAA. Residues 57-183 form the Plastocyanin-like domain; the sequence is GNCAATVESN…LMNGKVTLVD (127 aa). Histidine 102, cysteine 166, histidine 171, and methionine 175 together coordinate Cu cation.

Cu cation is required as a cofactor.

It is found in the cell outer membrane. This chain is Outer membrane protein H.8, found in Neisseria gonorrhoeae.